We begin with the raw amino-acid sequence, 344 residues long: UPF0283 membrane protein YcjF (344 aa).

Helical transmembrane passes span 70–90, 100–120, and 213–233; these read MVMGGLALFGASVVGQGVQWT, VALGGCAAGALIIGAGVGSVV, and ESTLMIAVSPLALVDMAFIAW.

The protein belongs to the UPF0283 family.

Its subcellular location is the cell inner membrane. This is UPF0283 membrane protein YcjF from Shigella dysenteriae serotype 1 (strain Sd197).